Reading from the N-terminus, the 850-residue chain is Pro-neuregulin-2, membrane-bound isoform (850 aa).

Residues 1–96 are disordered; that stretch reads MRQVCCSALP…AAAAGGMRRD (96 aa). Positions 1–111 are excised as a propeptide; the sequence is MRQVCCSALP…SMLLFGVSLA (111 aa). Residues 20–59 show a composition bias toward low complexity; the sequence is SSYSDSSSSSSERSSSSSSSSSESGSSSRSSSNNSSISRP. Asn-52 and Asn-53 each carry an N-linked (GlcNAc...) asparagine glycan. Pro residues predominate over residues 60-74; sequence AAPPEPRPQQQPQPR. The segment covering 75 to 92 has biased composition (low complexity); that stretch reads SPAARRAAARSRAAAAGG. Residues 112-405 are Extracellular-facing; it reads CYSPSLKSVQ…QKAEELYQKR (294 aa). Asn-147, Asn-278, and Asn-346 each carry an N-linked (GlcNAc...) asparagine glycan. Residues 237–332 form the Ig-like C2-type domain; sequence PKLKKMKSQT…RGRLYVNSVS (96 aa). Disulfide bonds link Cys-257/Cys-311, Cys-345/Cys-359, Cys-353/Cys-370, and Cys-372/Cys-381. Residues 341-382 enclose the EGF-like domain; sequence HARKCNETAKSYCVNGGVCYYIEGINQLSCKCPNGFFGQRCL. A helical membrane pass occupies residues 406-426; the sequence is VLTITGICVALLVVGIVCVVA. The Cytoplasmic segment spans residues 427 to 850; it reads YCKTKKQRKQ…PRAKQDSAPL (424 aa). Disordered regions lie at residues 492–535, 566–585, 647–681, 700–788, and 801–850; these read TFSG…DSQS, EERR…SLRD, LLRH…YYPA, LPAS…DGAL, and AHDA…SAPL. A compositionally biased stretch (low complexity) spans 494 to 506; sequence SGSHSCSPSHHCS. Basic and acidic residues predominate over residues 514-527; sequence HRHESHTWSLERSE. The segment covering 651–665 has biased composition (pro residues); that stretch reads PAPPGPGPGPGPGPG. The span at 750 to 767 shows a compositional bias: low complexity; that stretch reads GLAAQRARAARDSLSLSS.

It belongs to the neuregulin family. Interacts with ERBB3 and ERBB4. Proteolytic cleavage close to the plasma membrane on the external face leads to the release of the soluble growth factor form. Post-translationally, extensive glycosylation precedes the proteolytic cleavage. In terms of tissue distribution, restricted to the cerebellum in the adult.

The protein localises to the cell membrane. It localises to the secreted. Functionally, direct ligand for ERBB3 and ERBB4 tyrosine kinase receptors. Concomitantly recruits ERBB1 and ERBB2 coreceptors, resulting in ligand-stimulated tyrosine phosphorylation and activation of the ERBB receptors. May also promote the heterodimerization with the EGF receptor. In Homo sapiens (Human), this protein is Pro-neuregulin-2, membrane-bound isoform (NRG2).